Here is a 58-residue protein sequence, read N- to C-terminus: uncharacterized protein (58 aa).

Residues 3-52 (KVILEHLQRIEKQLEILNSKIENFLGFEELSEEELKELDEIEAKMEKGEK) are a coiled coil.

This is an uncharacterized protein from Archaeoglobus fulgidus (strain ATCC 49558 / DSM 4304 / JCM 9628 / NBRC 100126 / VC-16).